Reading from the N-terminus, the 280-residue chain is Hydroxyethylthiazole kinase (280 aa).

M58 is a substrate binding site. R129 contributes to the ATP binding site. Residue A206 participates in substrate binding.

The protein belongs to the Thz kinase family. Requires Mg(2+) as cofactor.

The enzyme catalyses 5-(2-hydroxyethyl)-4-methylthiazole + ATP = 4-methyl-5-(2-phosphooxyethyl)-thiazole + ADP + H(+). It functions in the pathway cofactor biosynthesis; thiamine diphosphate biosynthesis; 4-methyl-5-(2-phosphoethyl)-thiazole from 5-(2-hydroxyethyl)-4-methylthiazole: step 1/1. Thiazole kinase involved in thiamine salvage pathway. In Zea mays (Maize), this protein is Hydroxyethylthiazole kinase (THIM).